The sequence spans 375 residues: tRNA/tmRNA (uracil-C(5))-methyltransferase (375 aa).

S-adenosyl-L-methionine-binding residues include Gln-197, Tyr-225, Asn-230, Glu-246, and Asp-306. Cys-331 serves as the catalytic Nucleophile. Glu-365 serves as the catalytic Proton acceptor.

It belongs to the class I-like SAM-binding methyltransferase superfamily. RNA M5U methyltransferase family. TrmA subfamily.

It carries out the reaction uridine(54) in tRNA + S-adenosyl-L-methionine = 5-methyluridine(54) in tRNA + S-adenosyl-L-homocysteine + H(+). The catalysed reaction is uridine(341) in tmRNA + S-adenosyl-L-methionine = 5-methyluridine(341) in tmRNA + S-adenosyl-L-homocysteine + H(+). In terms of biological role, dual-specificity methyltransferase that catalyzes the formation of 5-methyluridine at position 54 (m5U54) in all tRNAs, and that of position 341 (m5U341) in tmRNA (transfer-mRNA). This is tRNA/tmRNA (uracil-C(5))-methyltransferase from Aliarcobacter butzleri (strain RM4018) (Arcobacter butzleri).